Reading from the N-terminus, the 141-residue chain is Large ribosomal subunit protein uL11 (141 aa).

This sequence belongs to the universal ribosomal protein uL11 family. In terms of assembly, part of the ribosomal stalk of the 50S ribosomal subunit. Interacts with L10 and the large rRNA to form the base of the stalk. L10 forms an elongated spine to which L12 dimers bind in a sequential fashion forming a multimeric L10(L12)X complex. In terms of processing, one or more lysine residues are methylated.

Forms part of the ribosomal stalk which helps the ribosome interact with GTP-bound translation factors. The polypeptide is Large ribosomal subunit protein uL11 (Clostridioides difficile (strain 630) (Peptoclostridium difficile)).